A 691-amino-acid polypeptide reads, in one-letter code: Elongation factor G (691 aa).

The tr-type G domain maps to 8–283 (KKVRNIGIAA…AVVAYLPAPD (276 aa)). GTP-binding positions include 17 to 24 (AHIDAGKT), 81 to 85 (DTPGH), and 135 to 138 (NKMD).

The protein belongs to the TRAFAC class translation factor GTPase superfamily. Classic translation factor GTPase family. EF-G/EF-2 subfamily.

The protein resides in the cytoplasm. In terms of biological role, catalyzes the GTP-dependent ribosomal translocation step during translation elongation. During this step, the ribosome changes from the pre-translocational (PRE) to the post-translocational (POST) state as the newly formed A-site-bound peptidyl-tRNA and P-site-bound deacylated tRNA move to the P and E sites, respectively. Catalyzes the coordinated movement of the two tRNA molecules, the mRNA and conformational changes in the ribosome. This chain is Elongation factor G, found in Campylobacter jejuni subsp. jejuni serotype O:6 (strain 81116 / NCTC 11828).